The chain runs to 525 residues: Bifunctional purine biosynthesis protein PurH (525 aa).

One can recognise an MGS-like domain in the interval 1 to 149; the sequence is MSDPVIKRAL…KNNESVTVVT (149 aa).

The protein belongs to the PurH family.

The catalysed reaction is (6R)-10-formyltetrahydrofolate + 5-amino-1-(5-phospho-beta-D-ribosyl)imidazole-4-carboxamide = 5-formamido-1-(5-phospho-D-ribosyl)imidazole-4-carboxamide + (6S)-5,6,7,8-tetrahydrofolate. It carries out the reaction IMP + H2O = 5-formamido-1-(5-phospho-D-ribosyl)imidazole-4-carboxamide. Its pathway is purine metabolism; IMP biosynthesis via de novo pathway; 5-formamido-1-(5-phospho-D-ribosyl)imidazole-4-carboxamide from 5-amino-1-(5-phospho-D-ribosyl)imidazole-4-carboxamide (10-formyl THF route): step 1/1. The protein operates within purine metabolism; IMP biosynthesis via de novo pathway; IMP from 5-formamido-1-(5-phospho-D-ribosyl)imidazole-4-carboxamide: step 1/1. The sequence is that of Bifunctional purine biosynthesis protein PurH from Prosthecochloris aestuarii (strain DSM 271 / SK 413).